Consider the following 166-residue polypeptide: Regulatory protein RecX (166 aa).

The protein belongs to the RecX family.

It is found in the cytoplasm. Modulates RecA activity. This chain is Regulatory protein RecX, found in Escherichia coli (strain SMS-3-5 / SECEC).